A 422-amino-acid chain; its full sequence is Serine hydroxymethyltransferase (422 aa).

G120–I122 serves as a coordination point for (6S)-5,6,7,8-tetrahydrofolate. N6-(pyridoxal phosphate)lysine is present on K226. E241 contacts (6S)-5,6,7,8-tetrahydrofolate.

This sequence belongs to the SHMT family. In terms of assembly, homodimer. Requires pyridoxal 5'-phosphate as cofactor.

It localises to the cytoplasm. It catalyses the reaction 5,10-methylenetetrahydromethanopterin + glycine + H2O = 5,6,7,8-tetrahydromethanopterin + L-serine. Its pathway is amino-acid biosynthesis; glycine biosynthesis; glycine from L-serine: step 1/1. In terms of biological role, catalyzes the reversible interconversion of serine and glycine with tetrahydromethanopterin (H4MPT) serving as the one-carbon carrier. Also exhibits a pteridine-independent aldolase activity toward beta-hydroxyamino acids, producing glycine and aldehydes, via a retro-aldol mechanism. This Methanosphaera stadtmanae (strain ATCC 43021 / DSM 3091 / JCM 11832 / MCB-3) protein is Serine hydroxymethyltransferase.